The following is a 506-amino-acid chain: Pyruvate kinase 2 (506 aa).

Residue Ser-24 is modified to Phosphoserine. Arg-51 provides a ligand contact to substrate. 4 residues coordinate K(+): Asn-53, Ser-55, Asp-86, and Thr-87. 53-56 (NFSH) is a binding site for ATP. ATP is bound by residues Arg-93 and Lys-179. Residue Glu-244 coordinates Mg(2+). Residues Gly-267, Asp-268, and Thr-300 each coordinate substrate. Asp-268 serves as a coordination point for Mg(2+).

The protein belongs to the pyruvate kinase family. As to quaternary structure, homotetramer. Mg(2+) serves as cofactor. The cofactor is K(+).

It catalyses the reaction pyruvate + ATP = phosphoenolpyruvate + ADP + H(+). Its pathway is carbohydrate degradation; glycolysis; pyruvate from D-glyceraldehyde 3-phosphate: step 5/5. Not activated by fructose-1,6-bisphosphate. In terms of biological role, may be used by cells under conditions in which the level of glycolytic flux is very low. The chain is Pyruvate kinase 2 (PYK2) from Saccharomyces cerevisiae (strain ATCC 204508 / S288c) (Baker's yeast).